We begin with the raw amino-acid sequence, 69 residues long: DNA gyrase inhibitor YacG (69 aa).

The Zn(2+) site is built by cysteine 14, cysteine 17, cysteine 33, and cysteine 37. A disordered region spans residues 46 to 69 (ADEEKSIPGAPDMSDSDGWSEDQY). The span at 59–69 (SDSDGWSEDQY) shows a compositional bias: acidic residues.

This sequence belongs to the DNA gyrase inhibitor YacG family. Interacts with GyrB. It depends on Zn(2+) as a cofactor.

Its function is as follows. Inhibits all the catalytic activities of DNA gyrase by preventing its interaction with DNA. Acts by binding directly to the C-terminal domain of GyrB, which probably disrupts DNA binding by the gyrase. In Aliivibrio fischeri (strain MJ11) (Vibrio fischeri), this protein is DNA gyrase inhibitor YacG.